A 462-amino-acid polypeptide reads, in one-letter code: Probable acid phosphatase SPBC4.06 (462 aa).

His-35 (nucleophile) is an active-site residue. Residue Asp-330 is the Proton donor of the active site.

Belongs to the histidine acid phosphatase family.

Its subcellular location is the mitochondrion. It carries out the reaction a phosphate monoester + H2O = an alcohol + phosphate. This chain is Probable acid phosphatase SPBC4.06, found in Schizosaccharomyces pombe (strain 972 / ATCC 24843) (Fission yeast).